Reading from the N-terminus, the 216-residue chain is Heart- and neural crest derivatives-expressed protein 2 (216 aa).

The tract at residues 74–115 (MDHSHYGGVPPGSGPPGLGGPRPVKRRGTANRKERRRTQSIN) is disordered. Positions 82-93 (VPPGSGPPGLGG) are enriched in gly residues. A compositionally biased stretch (basic residues) spans 96–111 (PVKRRGTANRKERRRT). The bHLH domain maps to 98 to 150 (KRRGTANRKERRRTQSINSAFAELRECIPNVPADTKLSKIKTLRLATSYIAYL).

As to quaternary structure, efficient DNA binding requires dimerization with another bHLH protein.

It is found in the nucleus. In terms of biological role, essential for cardiac morphogenesis. Binds DNA on E-box consensus sequence 5'-CANNTG-3'. Plays an important role in limb development, particularly in the establishment of anterior-posterior polarization of the limb bud. The sequence is that of Heart- and neural crest derivatives-expressed protein 2 (HAND2) from Gallus gallus (Chicken).